We begin with the raw amino-acid sequence, 164 residues long: UPF0304 protein YfbU (164 aa).

The protein belongs to the UPF0304 family.

The sequence is that of UPF0304 protein YfbU from Salmonella enteritidis PT4 (strain P125109).